The sequence spans 157 residues: UPF0178 protein BH1374 (157 aa).

It belongs to the UPF0178 family.

This is UPF0178 protein BH1374 from Halalkalibacterium halodurans (strain ATCC BAA-125 / DSM 18197 / FERM 7344 / JCM 9153 / C-125) (Bacillus halodurans).